A 325-amino-acid polypeptide reads, in one-letter code: Retinal homeobox protein Rx-B (325 aa).

An Octapeptide motif motif is present at residues 32 to 39 (HSIEAILG). The segment covering 75 to 87 (TEEIHPQQEHLED) has biased composition (basic and acidic residues). The interval 75-136 (TEEIHPQQEH…KKKHRRNRTT (62 aa)) is disordered. The span at 99 to 117 (AKTSSECLSPGLSTSNSDN) shows a compositional bias: polar residues. The homeobox DNA-binding region spans 130–189 (HRRNRTTFTTYQLHELERAFEKSHYPDVYSREELAMKVNLPEVRVQVWFQNRRAKWRRQE). An OAR motif is present at residues 302–315 (NSIASLRMKAKEHI). A Nuclear localization signal motif is present at residues 308–312 (RMKAK).

The protein belongs to the paired homeobox family. Bicoid subfamily. As to expression, highly expressed in anterior neural plate followed by neural retina, pigmented epithelium, in pineal gland, diencephalon floor and epiphysis. At later stages, the neuroretina remains the primary site of expression. No expression in the developing lens and cornea.

The protein resides in the nucleus. Functionally, plays a critical role in eye formation by regulating the initial specification of retinal cells and/or their subsequent proliferation. The chain is Retinal homeobox protein Rx-B (rax-b) from Xenopus laevis (African clawed frog).